The following is a 930-amino-acid chain: MPSFVLWTFHLCSQWFQGLTDLLPHIPDTQTVNNFASQTGLLYPGGMKYSKIASWVCIPLLTCRGVDATNSADGGSELQLNESPFSKNWQVLGPFEIGTRESSWGADPLEAYGGFQTLQYDPKASFDSSLALNGLANWSMASTHVNSTANPPETILDINLSPDNLTSLQEVYGWDAKQYQAWARGTLTVSKSNSVVALYTDRIWEYRIDNKSYFGGDFFGFRRAPLLLDLSPGTHTVDLRVVRDVRALGAVGEPFINVTLIAQELSKTLIVDKKSILVADVVENRLISPHASVTLHNTMGNPVDVAARFSLKMLNNNVKLEEAQSRAIGFTIEAKDKINVPSSVSLYFEYTTPDDSSVQRTQTMTITFTRRKLPEVQQNTFMLPGGVVSYATMRPPTSLECNKDKSAKLPVLLGLHGAGQAASDEIIRTMLDGVSDICAWTLFPSGVTPWSGDDWHTWGFADLQHSVRALNDYIKYSGWTGVGLIDGDWIIAGHSNGGQGTWYTISHYPDKIIAAAPVAGYTSIENYVPYSMWHNTDSLLASTFYRARQDFKHEILVDNFAGIPVYQQHGASDDNVVVYHSRLMHRLLQESGSPSKYHEVPGKNHWYTGIMTSDFLKDFYRTYVQRPNATDLLPQRFSVTLPPAGHMGTRGGIYVDQSHTPDRVGSIEVERGMANDGVWKLKTRNIRRFHLETSAIRSHVPLYIQIDGSRFTVTPSNSTTTWYTQDAAGKWTSGGDSWRTISQRYGRQAGVNAFLRTEAPFTVTAAAQETRDLALQTCRNLFQYLSADCIISYAVPTANSTTATSPAGNNVVILLGAQPNGYTAGDSAISISARSLDIKTSQGTTSYPFEPGLGAIFIRPLVNERLELVIWGSDMAGLQQAARLVPVLTGVGQPDFVVVNKGTPLKGQGSLYAAGFFDSEWKVSAASYVS.

The signal sequence occupies residues 1-20 (MPSFVLWTFHLCSQWFQGLT). N-linked (GlcNAc...) asparagine glycosylation is found at asparagine 137, asparagine 146, asparagine 164, asparagine 210, asparagine 257, asparagine 628, asparagine 717, and asparagine 799.

Its subcellular location is the secreted. This is an uncharacterized protein from Arthroderma benhamiae (strain ATCC MYA-4681 / CBS 112371) (Trichophyton mentagrophytes).